Consider the following 65-residue polypeptide: Sec-independent protein translocase protein TatA (65 aa).

A helical membrane pass occupies residues 1–21 (MFGLGGQELVLILLIILLLFG).

The protein belongs to the TatA/E family. As to quaternary structure, forms a complex with TatC.

Its subcellular location is the cell inner membrane. Functionally, part of the twin-arginine translocation (Tat) system that transports large folded proteins containing a characteristic twin-arginine motif in their signal peptide across membranes. TatA could form the protein-conducting channel of the Tat system. This is Sec-independent protein translocase protein TatA from Chlorobium phaeobacteroides (strain DSM 266 / SMG 266 / 2430).